Here is an 849-residue protein sequence, read N- to C-terminus: A-kinase anchor protein 4 (849 aa).

Positions M1–N188 are excised as a propeptide. A phosphoserine mark is found at S96, S130, S190, and S204. Residues K183–V205 show a composition bias toward polar residues. The tract at residues K183 to G210 is disordered. T207 carries the phosphothreonine modification. 3 positions are modified to phosphoserine: S213, S226, and S271. Residues F219 to A232 form a PKA-RI and PKA-RII subunit binding domain region. Y301 is modified (phosphotyrosine). Phosphoserine is present on residues S302, S341, S431, S442, S444, S463, S492, S497, and S504. Positions Y335–M344 are PKA-RI-alpha subunit binding domain. The residue at position 506 (T506) is a Phosphothreonine. Phosphoserine is present on S538. S583 bears the Phosphoserine; by STK33 mark. 4 positions are modified to phosphoserine: S628, S633, S652, and S702.

It belongs to the AKAP110 family. Interacts with PRKAR1A and PRKAR2A. Interacts with ENO4. Interacts with QRICH2. In terms of processing, phosphorylated by STK33 during sperm flagella assembly. In terms of tissue distribution, expressed in the fibrous sheath of spermatozoa (at protein level). Expressed in step 1 to step 6 spermatids, abundance then increases during steps 8 to 12, abundance decreases thereafter.

The protein localises to the cell projection. Its subcellular location is the cilium. It localises to the flagellum. Its function is as follows. Major structural component of sperm fibrous sheath. Plays a role in sperm motility. This is A-kinase anchor protein 4 from Mus musculus (Mouse).